The chain runs to 493 residues: MTLVDKFVTHVISESSFEEMDRIYLTNRVLARVGEGVLEVETNLDKLIDLKDQLVEEAVRLETIEDSQTAREILGTELMDLVTPCPSQVNRDFWEAYAYSPEQAIEDFYQLSRKNDYIKLKAIAKNIAYRVPSDYGELEITINLSKPEKDPKEIAVAKLVQASNYPQCQLCLENEGYHGRVNHPARSNHRIIRFEMVGQEWGFQYSPYAYFNEHCIFLDGQHRPMAISRQSFERLLAIVEQFPGYFAGSNADLPIVGGSILTHDHYQGGRHVFPMELAPLQKTFRFAGFEQVKAGIIKWPMSVLRLTSDSKEDLINLADKIFQEWRQYSDSSVQILAETDGTPHHTITPIARKRDGQFELDLVLRDNQTSAEHPDGIYHPHKDVQHIKKENIGLIEVMGLAILPPRLKEEVEQVASYLVGEAVTVADYHQEWADQLKSQHPDLTDKEKALAIVKDSVGAIFVRVLEDAGVYKQTEQGQTAFMRFVEQVGILLD.

The protein belongs to the galactose-1-phosphate uridylyltransferase type 2 family.

The protein localises to the cytoplasm. The enzyme catalyses alpha-D-galactose 1-phosphate + UDP-alpha-D-glucose = alpha-D-glucose 1-phosphate + UDP-alpha-D-galactose. The protein operates within carbohydrate metabolism; galactose metabolism. The chain is Galactose-1-phosphate uridylyltransferase from Streptococcus pneumoniae serotype 19F (strain G54).